Consider the following 669-residue polypeptide: MRMSATVGIGRIPVRDVQPVVEYGRRPAKAVTGETFEVTATVFREGHDAVAANVVLKDPEGRPGPWTPMRELAPGSDRWGATVTPGAPGNWTYRVEAWSDPVATWRHAARIKVPAGIDAGLVLEEGSELYRRAAAGVPKDSGRDVLLAAATALLDDTLPVATRLAAALTPQVDAVLARHPLRDLVTSSDPLPLLVERERALYGAWYEFFPRSEGTPHTPHGTFRTAARRLPAIAAMGFDVVYLPPIHPIGTTHRKGRNNTLSATGDDVGVPWAIGSPEGGHDSIHPALGTLDDFDHFVTEAARHGLEIALDFALQCSPDHPWVHKHPEWFHHRPDGTIAHAENPPKKYQDIYPIAFDADPDGLATETVRILRHWMDHGVRIFRVDNPHTKPVAFWERVIADINGTDPDVIFLAEAFTRPAMMATLAQIGFQQSYTYFTWRNTKQELTEYLEELSGEAAAYMRPNFFANTPDILHAYLQHGGRPAFEVRAVLAATLSPTWGIYSGYELCENTPLREGSEEYLDSEKYQLKPRDWTRAAREGTTIAPLVTRLNTIRREHPALHRLRNLRFHHTDNDALIAYSKRVGSDVVLVVANLDPHRTQEATISLDMPQLGLDWHDSVPVHDELTGRTYHWGRANYVRLEPGRAPAHVFHVRRPSAAAAPQNGGSGAS.

Alpha-maltose 1-phosphate is bound by residues lysine 255, glutamine 315, and aspartate 350. The active-site Nucleophile is aspartate 385. Residue asparagine 386 coordinates alpha-maltose 1-phosphate. Glutamate 414 (proton donor) is an active-site residue. Position 525 to 526 (525 to 526 (KY)) interacts with alpha-maltose 1-phosphate.

It belongs to the glycosyl hydrolase 13 family. GlgE subfamily. Homodimer.

It carries out the reaction alpha-maltose 1-phosphate + [(1-&gt;4)-alpha-D-glucosyl](n) = [(1-&gt;4)-alpha-D-glucosyl](n+2) + phosphate. Functionally, maltosyltransferase that uses maltose 1-phosphate (M1P) as the sugar donor to elongate linear or branched alpha-(1-&gt;4)-glucans. Maltooligosaccharides with a degree of polymerization (DP) superior or equal to 4 are efficient acceptors, with DP6 being optimal in the GlgE-catalyzed polymerization with M1P. Is probably involved in a branched alpha-glucan biosynthetic pathway from trehalose, together with TreS, Mak and GlgB. In Streptomyces coelicolor (strain ATCC BAA-471 / A3(2) / M145), this protein is Alpha-1,4-glucan:maltose-1-phosphate maltosyltransferase 2 (glgE2).